The primary structure comprises 860 residues: Leucine--tRNA ligase (860 aa).

A 'HIGH' region motif is present at residues 42-52; sequence PYPSGRLHMGH. The 'KMSKS' region signature appears at 619–623; the sequence is KMSKS. Lys-622 serves as a coordination point for ATP.

It belongs to the class-I aminoacyl-tRNA synthetase family.

Its subcellular location is the cytoplasm. The catalysed reaction is tRNA(Leu) + L-leucine + ATP = L-leucyl-tRNA(Leu) + AMP + diphosphate. The chain is Leucine--tRNA ligase from Photorhabdus laumondii subsp. laumondii (strain DSM 15139 / CIP 105565 / TT01) (Photorhabdus luminescens subsp. laumondii).